The sequence spans 474 residues: Solute carrier family 49 member A3 (474 aa).

The interval 1-20 is disordered; that stretch reads MEGESAETEPLIQSSSAADR. 12 helical membrane-spanning segments follow: residues 38–58, 69–89, 105–126, 134–154, 175–195, 201–221, 258–278, 290–310, 326–346, 349–369, 388–408, and 428–448; these read WFILSVLCLLNCSNAMAWLTF, LCVSLPLVNWLSLVFVLAAVV, CSLIGSSWLNACGCVLRVCGVL, VFAVVMCGQTLCALAQPLVIF, LASMANTVGLLLANLLSPLIV, LFLLLLIYSIPAAVACLLATL, WILLLCFGSGIGIFTCFSTLL, GFAGVCGAVSIVCGVAGAFLL, ICMCLTSVSCSAFAVVSQLPA, VLLVLVCCCFGLFGYSVYPVG, LIFTSGQIQAALYLLLLQALA, and VPVLVMAGVCAISSCVFVVFF.

This sequence belongs to the major facilitator superfamily.

It is found in the membrane. This is Solute carrier family 49 member A3 (slc49a3) from Danio rerio (Zebrafish).